Reading from the N-terminus, the 384-residue chain is Calreticulin-3 (384 aa).

The N-terminal stretch at 1-19 (MAAARVPLWAICVRRVALA) is a signal peptide. The tract at residues 20–197 (TVYFQEEFLD…GQSIESGSIE (178 aa)) is N-domain. N-linked (GlcNAc...) asparagine glycosylation occurs at Asn-42. Cys-105 and Cys-137 are disulfide-bonded. The an alpha-D-glucoside site is built by Tyr-109, Lys-111, Tyr-128, and Asp-135. 7 consecutive repeat copies span residues 191 to 202 (IESGSIEYDWQL), 209 to 220 (EKASAEAEGWDQ), 222 to 231 (AKDKSQDWEK), 235 to 246 (DASASKPSDWKG), 250 to 260 (GDWQAAMLQKP), 264 to 272 (DGLKPEGID), and 274 to 284 (DVWLHQKMKNS). Positions 191-246 (IESGSIEYDWQLTSLKKMEKASAEAEGWDQAAKDKSQDWEKHFLDASASKPSDWKG) are 4 X approximate repeats. The interval 198–294 (YDWQLTSLKK…YLTEYDLSEF (97 aa)) is P-domain. Residues 250–284 (GDWQAAMLQKPPYQDGLKPEGIDKDVWLHQKMKNS) form a 3 X approximate repeats region. A C-domain region spans residues 295 to 384 (ENIGAVGLEL…FKGFHRRNEF (90 aa)). Glu-303 lines the an alpha-D-glucoside pocket. Residues 381–384 (RNEF) carry the Prevents secretion from ER motif.

The protein belongs to the calreticulin family. As to quaternary structure, component of an EIF2 complex at least composed of CELF1/CUGBP1, CALR, CALR3, EIF2S1, EIF2S2, HSP90B1 and HSPA5.

Its subcellular location is the endoplasmic reticulum lumen. During spermatogenesis, may act as a lectin-independent chaperone for specific client proteins such as ADAM3. CALR3 capacity for calcium-binding may be absent or much lower than that of CALR. Required for sperm fertility. The chain is Calreticulin-3 (CALR3) from Bos taurus (Bovine).